Reading from the N-terminus, the 444-residue chain is Exodeoxyribonuclease 7 large subunit (444 aa).

Belongs to the XseA family. Heterooligomer composed of large and small subunits.

It is found in the cytoplasm. The enzyme catalyses Exonucleolytic cleavage in either 5'- to 3'- or 3'- to 5'-direction to yield nucleoside 5'-phosphates.. Functionally, bidirectionally degrades single-stranded DNA into large acid-insoluble oligonucleotides, which are then degraded further into small acid-soluble oligonucleotides. This chain is Exodeoxyribonuclease 7 large subunit, found in Rickettsia akari (strain Hartford).